The primary structure comprises 359 residues: Peptide chain release factor 1 (359 aa).

Gln-236 is subject to N5-methylglutamine.

Belongs to the prokaryotic/mitochondrial release factor family. Methylated by PrmC. Methylation increases the termination efficiency of RF1.

It is found in the cytoplasm. Functionally, peptide chain release factor 1 directs the termination of translation in response to the peptide chain termination codons UAG and UAA. This Streptococcus pyogenes serotype M18 (strain MGAS8232) protein is Peptide chain release factor 1.